Here is an 839-residue protein sequence, read N- to C-terminus: Toll-like receptor 4 (839 aa).

The signal sequence occupies residues 1–23; it reads MMSASRLAGTLIPAMAFLSCVRP. At 24–631 the chain is on the extracellular side; it reads ESWEPCVEVV…SLNITCQMNK (608 aa). A disulfide bridge connects residues Cys-29 and Cys-40. N-linked (GlcNAc...) asparagine glycosylation occurs at Asn-35. LRR repeat units lie at residues 55-76, 79-100, 103-124, 127-148, and 151-172; these read STKN…SFFS, ELQV…AYQS, HLST…AFSG, SLQK…PIGH, and TLKE…EYFS. N-linked (GlcNAc...) asparagine glycosylation is present at Asn-173. LRR repeat units lie at residues 176-199, 205-225, and 227-247; these read NLEH…RVLH, NLSL…AFKE, and RLHK…KTCI. Asn-205 is a glycosylation site (N-linked (GlcNAc...) asparagine). Cys-281 and Cys-306 are joined by a disulfide. Asn-282 and Asn-309 each carry an N-linked (GlcNAc...) asparagine glycan. LRR repeat units lie at residues 331–351, 352–373, 374–394, 400–422, 423–444, 448–456, 472–495, 497–518, 521–542, and 545–565; these read GWQH…LKLK, SLKR…VDLP, SLEF…CSQS, SLKY…LGLE, QLEH…SVFL, NLIYLDISH, SLEV…FTEL, NLTF…AFNS, SLQV…PYKC, and SLQV…QELQ. A disulfide bridge links Cys-390 with Cys-391. N-linked (GlcNAc...) asparagine glycans are attached at residues Asn-497 and Asn-526. N-linked (GlcNAc...) asparagine glycosylation occurs at Asn-575. The 51-residue stretch at 579-629 folds into the LRRCT domain; that stretch reads NDFACTCEHQSFLQWIKDQRQLLVEVERMECATPSDKQGMPVLSLNITCQM. 2 cysteine pairs are disulfide-bonded: Cys-583–Cys-609 and Cys-585–Cys-627. N-linked (GlcNAc...) asparagine glycosylation is found at Asn-624 and Asn-630. Residues 632-652 traverse the membrane as a helical segment; that stretch reads TIIGVSVLSVLVVSVVAVLVY. Topologically, residues 653–839 are cytoplasmic; sequence KFYFHLMLLA…GCNWQEATSI (187 aa). One can recognise a TIR domain in the interval 672-815; the sequence is NIYDAFVIYS…IFWRRLRKAL (144 aa).

The protein belongs to the Toll-like receptor family. As to quaternary structure, belongs to the lipopolysaccharide (LPS) receptor, a multi-protein complex containing at least CD14, LY96 and TLR4. Binding to bacterial LPS leads to homodimerization. Interacts with LY96 via the extracellular domain. Interacts with MYD88 and TIRAP via their respective TIR domains. Interacts with NOX4. Interacts with CNPY3 and HSP90B1; this interaction is required for proper folding in the endoplasmic reticulum. Interacts with MAP3K21; this interaction leads to negative regulation of TLR4 signaling. Interacts with CD36, following CD36 stimulation by oxLDL or amyloid-beta 42, and forms a heterodimer with TLR6. The trimeric complex is internalized and triggers inflammatory response. LYN kinase activity facilitates TLR4-TLR6 heterodimerization and signal initiation. Interacts with TICAM1 in response to LPS in a WDFY1-dependent manner. Interacts with WDFY1 in response to LPS. Interacts with SMPDL3B. Interacts with CEACAM1; upon lipopolysaccharide stimulation, forms a complex including TLR4 and the phosphorylated form of SYK and CEACAM1, which in turn, recruits PTPN6 that dephosphorylates SYK, reducing the production of reactive oxygen species (ROS) and lysosome disruption, which in turn, reduces the activity of the inflammasome. Interacts with RFTN1; the interaction occurs in response to lipopolysaccharide stimulation. Interacts with SCIMP; the interaction occurs in response to lipopolysaccharide stimulation and is enhanced by phosphorylation of SCIMP by LYN. This interaction facilitates the phosphorylation of TLR4 by LYN which elicits a selective cytokine response in macrophages. Interacts with TRAF3IP3. Interacts with TREM1; this interaction enhances TLR4-mediated inflammatory response. Interacts with ZG16B/PAUF. Interacts with CD82; this interaction inhibits TLR4-mediated signaling pathway. Post-translationally, phosphorylated on tyrosine residues by LYN after binding lipopolysaccharide. Ubiquitinated by RNF128 via 'Lys-28'-linked polyubiquitin chains, leading to proteasomal degradation.

It is found in the cell membrane. Its subcellular location is the early endosome. The protein localises to the cell projection. The protein resides in the ruffle. Functionally, transmembrane receptor that functions as a pattern recognition receptor recognizing pathogen- and damage-associated molecular patterns (PAMPs and DAMPs) to induce innate immune responses via downstream signaling pathways. At the plasma membrane, cooperates with LY96 to mediate the innate immune response to bacterial lipopolysaccharide (LPS). Also involved in LPS-independent inflammatory responses triggered by free fatty acids, such as palmitate, and Ni(2+). Mechanistically, acts via MYD88, TIRAP and TRAF6, leading to NF-kappa-B activation, cytokine secretion and the inflammatory response. Alternatively, CD14-mediated TLR4 internalization via endocytosis is associated with the initiation of a MYD88-independent signaling via the TICAM1-TBK1-IRF3 axis leading to type I interferon production. In addition to the secretion of proinflammatory cytokines, initiates the activation of NLRP3 inflammasome and formation of a positive feedback loop between autophagy and NF-kappa-B signaling cascade. In complex with TLR6, promotes inflammation in monocytes/macrophages by associating with TLR6 and the receptor CD86. Upon ligand binding, such as oxLDL or amyloid-beta 42, the TLR4:TLR6 complex is internalized and triggers inflammatory response, leading to NF-kappa-B-dependent production of CXCL1, CXCL2 and CCL9 cytokines, via MYD88 signaling pathway, and CCL5 cytokine, via TICAM1 signaling pathway. In myeloid dendritic cells, vesicular stomatitis virus glycoprotein G but not LPS promotes the activation of IRF7, leading to type I IFN production in a CD14-dependent manner. The sequence is that of Toll-like receptor 4 (TLR4) from Pan paniscus (Pygmy chimpanzee).